Consider the following 227-residue polypeptide: 2,3-bisphosphoglycerate-dependent phosphoglycerate mutase (227 aa).

Substrate-binding positions include 7–14 (RHGQSEWN), 20–21 (TG), Arg-59, 86–89 (ERHY), Lys-97, 113–114 (RR), and 182–183 (GN). Catalysis depends on His-8, which acts as the Tele-phosphohistidine intermediate. The Proton donor/acceptor role is filled by Glu-86.

It belongs to the phosphoglycerate mutase family. BPG-dependent PGAM subfamily. As to quaternary structure, homodimer.

The catalysed reaction is (2R)-2-phosphoglycerate = (2R)-3-phosphoglycerate. Its pathway is carbohydrate degradation; glycolysis; pyruvate from D-glyceraldehyde 3-phosphate: step 3/5. In terms of biological role, catalyzes the interconversion of 2-phosphoglycerate and 3-phosphoglycerate. The chain is 2,3-bisphosphoglycerate-dependent phosphoglycerate mutase from Neisseria meningitidis serogroup B (strain ATCC BAA-335 / MC58).